The primary structure comprises 1216 residues: FK506-binding protein 15 (1216 aa).

An N-acetylmethionine modification is found at M1. Phosphoserine is present on residues S14 and S23. The interval 41–68 (YTAPKQPKKGQGTAAGNQTAPKPAPATT) is disordered. Low complexity predominate over residues 59-68 (TAPKPAPATT). Positions 71 to 168 (SSVLFATAVH…AVSFNKQVCV (98 aa)) are important for function in growth cone organization. Residue K91 is modified to N6-acetyllysine. The region spanning 196-289 (GDSLEVAYTG…VFEVEVRRVK (94 aa)) is the PPIase FKBP-type domain. The disordered stretch occupies residues 292-357 (RDSGSDGHSV…QLTVNSNPDT (66 aa)). Over residues 303–322 (SRDSAAPSPIPASDSLSADP) the composition is skewed to low complexity. S306, S310, S342, S344, and S617 each carry phosphoserine. Residues 340-356 (SKSNSLSEQLTVNSNPD) show a composition bias toward polar residues. 2 coiled-coil regions span residues 519–790 (MAVN…AAAE) and 820–865 (QQYR…RLEK). Residues 927-1216 (HQEEEEEEEE…DDDDDIGWLG (290 aa)) are disordered. The span at 929-940 (EEEEEEEEEEEE) shows a compositional bias: acidic residues. S948 is subject to Phosphoserine. The segment covering 954–964 (PATPGMPPAPP) has biased composition (pro residues). Positions 983 to 994 (TTPLPLQALPTP) are enriched in low complexity. S1018 bears the Phosphoserine mark. Over residues 1036–1045 (TSIPPKPPGP) the composition is skewed to pro residues. Phosphoserine occurs at positions 1050 and 1091. T1093 bears the Phosphothreonine mark. S1108, S1153, S1157, S1159, and S1190 each carry phosphoserine. T1198 carries the post-translational modification Phosphothreonine. A compositionally biased stretch (acidic residues) spans 1202–1216 (GDDDDDDDDDIGWLG).

This sequence belongs to the FKBP-type PPIase family. As to quaternary structure, interacts with WIP and actin. Interacts with TBC1D23. In terms of tissue distribution, expressed in brain, with highest levels in the granular cell layer of cerebellum and in the granule cell layer of dentate gyrus.

The protein resides in the cytoplasm. It localises to the cell projection. Its subcellular location is the axon. The protein localises to the early endosome. Its function is as follows. Involved in the transport of early endosomes at the level of transition between microfilament-based and microtubule-based movement. May be involved in the cytoskeletal organization of neuronal growth cones. Seems to be inactive as a PPIase. The chain is FK506-binding protein 15 (Fkbp15) from Mus musculus (Mouse).